The sequence spans 750 residues: NAD(P)H-quinone oxidoreductase subunit 5, chloroplastic (750 aa).

16 helical membrane passes run 9-29, 40-60, 89-109, 125-145, 147-167, 185-205, 230-250, 258-278, 283-303, 327-347, 354-374, 396-416, 425-445, 548-568, 607-627, and 724-744; these read WIIPFLPLPVPMLIGVGLLLF, WAFTSILLLSIVMIFATNLSI, IDPLTSIMSMLITTVGIMVLI, FAYMSFFSTSMFGLVTSSNLI, IYIFWELVGMCSYLLIGFWFT, GDFGLLLGILGFYWITGSFEF, AALLFAGAVAKSAQFPLHIWL, TPISALIHAATMVAAGIFLVA, LFIVIPYILNIISLIGLITVL, LGYMILALGIGSYRSALFHLI, ALLFLGSGSVIHSMETIVGYS, TSFLLGTLSLSGIPPLACFWS, WLYSPIFAIIAWATAGLTAFY, LFPLLVLVLFTLFVGSIGIPF, IFSVSIAYFGIFLASFLYKPI, and LFFYFCCVSIFLVIYYKFYLF.

This sequence belongs to the complex I subunit 5 family. As to quaternary structure, NDH is composed of at least 16 different subunits, 5 of which are encoded in the nucleus.

It localises to the plastid. The protein localises to the chloroplast thylakoid membrane. The enzyme catalyses a plastoquinone + NADH + (n+1) H(+)(in) = a plastoquinol + NAD(+) + n H(+)(out). It carries out the reaction a plastoquinone + NADPH + (n+1) H(+)(in) = a plastoquinol + NADP(+) + n H(+)(out). Functionally, NDH shuttles electrons from NAD(P)H:plastoquinone, via FMN and iron-sulfur (Fe-S) centers, to quinones in the photosynthetic chain and possibly in a chloroplast respiratory chain. The immediate electron acceptor for the enzyme in this species is believed to be plastoquinone. Couples the redox reaction to proton translocation, and thus conserves the redox energy in a proton gradient. This is NAD(P)H-quinone oxidoreductase subunit 5, chloroplastic (ndhF) from Tecoma stans (Yellow bells).